Here is a 61-residue protein sequence, read N- to C-terminus: Photosystem II reaction center protein K (61 aa).

Positions Met1 to Ala24 are excised as a propeptide. The chain crosses the membrane as a helical span at residues Met40 to Phe60.

The protein belongs to the PsbK family. As to quaternary structure, PSII is composed of 1 copy each of membrane proteins PsbA, PsbB, PsbC, PsbD, PsbE, PsbF, PsbH, PsbI, PsbJ, PsbK, PsbL, PsbM, PsbT, PsbX, PsbY, PsbZ, Psb30/Ycf12, at least 3 peripheral proteins of the oxygen-evolving complex and a large number of cofactors. It forms dimeric complexes.

It is found in the plastid. It localises to the chloroplast thylakoid membrane. Its function is as follows. One of the components of the core complex of photosystem II (PSII). PSII is a light-driven water:plastoquinone oxidoreductase that uses light energy to abstract electrons from H(2)O, generating O(2) and a proton gradient subsequently used for ATP formation. It consists of a core antenna complex that captures photons, and an electron transfer chain that converts photonic excitation into a charge separation. This is Photosystem II reaction center protein K from Sinapis alba (White mustard).